The following is a 251-amino-acid chain: Ubiquinone/menaquinone biosynthesis C-methyltransferase UbiE (251 aa).

Residues T74, D95, and 123–124 (NA) contribute to the S-adenosyl-L-methionine site.

The protein belongs to the class I-like SAM-binding methyltransferase superfamily. MenG/UbiE family.

The catalysed reaction is a 2-demethylmenaquinol + S-adenosyl-L-methionine = a menaquinol + S-adenosyl-L-homocysteine + H(+). The enzyme catalyses a 2-methoxy-6-(all-trans-polyprenyl)benzene-1,4-diol + S-adenosyl-L-methionine = a 5-methoxy-2-methyl-3-(all-trans-polyprenyl)benzene-1,4-diol + S-adenosyl-L-homocysteine + H(+). Its pathway is quinol/quinone metabolism; menaquinone biosynthesis; menaquinol from 1,4-dihydroxy-2-naphthoate: step 2/2. The protein operates within cofactor biosynthesis; ubiquinone biosynthesis. Methyltransferase required for the conversion of demethylmenaquinol (DMKH2) to menaquinol (MKH2) and the conversion of 2-polyprenyl-6-methoxy-1,4-benzoquinol (DDMQH2) to 2-polyprenyl-3-methyl-6-methoxy-1,4-benzoquinol (DMQH2). The protein is Ubiquinone/menaquinone biosynthesis C-methyltransferase UbiE of Shewanella oneidensis (strain ATCC 700550 / JCM 31522 / CIP 106686 / LMG 19005 / NCIMB 14063 / MR-1).